The sequence spans 528 residues: MSTVNVQIGLHELLNGSNAQIQLSVPQLVEKVLMRNEGKLTSTGAVSASTGKYTGRSPKDKFIVKEASVADKIAWGAVNQPISEEHFNKLYTKVLEYLKEKEELFVFKGFAGADRNYRLPIQVINEYAWHNLFVHQLFIRPTEEELTTHESGFTIVSAPNFKADPAVDGTNSEAFIMVSFEKRIVLIGGTEYAGEMKKSIFSIMNFLLPEQDILSMHCSANVGEEGDVALFFGLSGTGKTTLSADPNRKLIGDDEHGWSDNGVFNIEGGCYAKCVNLSHEKEPQIFDAITFGSVLENVIINDQTRIADYNDTTLTENTRAAYPMHAIDNIVLPSVAGHPNTIIFLTADASGVLPPISKLSKEQAMYHFLSGYTSKLAGTERGVTSPQATFSTCFGSPFLPLDASRYAEMLGEKIEKHDAKVFLVNTGWTGGEYGVGKRMNLGYTRAMIQAALNGELAKTETAKHDIFGLEVPLHVPGVPDEVLMPEQTWADKAAYKAKAIELANEFKANFKKFDSVSEDIINLGGPIA.

Substrate is bound by residues Arg-56, Tyr-192, and Lys-198. Residues Lys-198, His-217, and 233–241 contribute to the ATP site; that span reads GLSGTGKTT. 2 residues coordinate Mn(2+): Lys-198 and His-217. Asp-254 lines the Mn(2+) pocket. 3 residues coordinate ATP: Glu-282, Arg-319, and Thr-444. Arg-319 is a binding site for substrate.

This sequence belongs to the phosphoenolpyruvate carboxykinase (ATP) family. Mn(2+) serves as cofactor.

It is found in the cytoplasm. The catalysed reaction is oxaloacetate + ATP = phosphoenolpyruvate + ADP + CO2. It functions in the pathway carbohydrate biosynthesis; gluconeogenesis. Its function is as follows. Involved in the gluconeogenesis. Catalyzes the conversion of oxaloacetate (OAA) to phosphoenolpyruvate (PEP) through direct phosphoryl transfer between the nucleoside triphosphate and OAA. This Bacillus cereus (strain B4264) protein is Phosphoenolpyruvate carboxykinase (ATP).